The following is a 51-amino-acid chain: MFKYVGEMLDRGLLLAIAFFVVYRAVLFCCARQRQQRQQLPSTADLQLDAM.

A helical membrane pass occupies residues 11 to 28; it reads RGLLLAIAFFVVYRAVLF.

The protein belongs to the arteriviridae ORF5a protein family. In terms of assembly, interacts with GP2b and GP4.

The protein resides in the virion. It localises to the host cell membrane. Minor virion component that plays an essential role in virus infectivity. In Porcine reproductive and respiratory syndrome virus (strain VR-2332) (PRRSV), this protein is Structural protein ORF5a.